Here is a 128-residue protein sequence, read N- to C-terminus: MTDTLDLEMDGIITEQRLLERRRAAAEQQRMNQELQDMVNLHQCKRGIFCLVKQAKVTYDSNTTGHRLSYKLPTKRQKLVVMVGEKPITITQHSVETEGCIHSPCQGPEDLCTLIKTLCGLKDLIPFN.

The protein belongs to the adenoviridae E3_15 family.

Functionally, protects virus-infected cells from TNF-induced cytolysis. In Human adenovirus C serotype 5 (HAdV-5), this protein is Early E3 14.5 kDa protein.